The primary structure comprises 501 residues: Geissoschizine oxidase (501 aa).

A helical membrane pass occupies residues methionine 1–valine 21. Asparagine 60 carries an N-linked (GlcNAc...) asparagine glycan. Heme is bound at residue cysteine 442.

The protein belongs to the cytochrome P450 family. Heme serves as cofactor. In terms of tissue distribution, expressed in leaf epidermis. Also present in the leaf internal phloem-associated parenchyma (IPAP) inside the mesophyll.

The protein localises to the membrane. The catalysed reaction is (19E)-geissoschizine + reduced [NADPH--hemoprotein reductase] + O2 = akuammicine + formate + oxidized [NADPH--hemoprotein reductase] + H2O + H(+). It catalyses the reaction (19E)-geissoschizine + reduced [NADPH--hemoprotein reductase] + O2 = 3,17-didehydrostemmadenine + oxidized [NADPH--hemoprotein reductase] + 2 H2O. It functions in the pathway alkaloid biosynthesis. Functionally, component of the seco-iridoid and derivatives monoterpenoid indole alkaloids (MIAs, e.g. vincristine, quinine, and strychnine) biosynthesis pathway. Catalyzes the oxidation of 19E-geissoschizine to produce a short-lived MIA unstable intermediate which can be spontaneously converted into akuammicine or oxidized by Redox1 and Redox2 to produce stemmadenine and 16S/R-deshydroxymethylstemmadenine (16S/R-DHS). This chain is Geissoschizine oxidase, found in Catharanthus roseus (Madagascar periwinkle).